The primary structure comprises 795 residues: Phenylalanine--tRNA ligase beta subunit (795 aa).

One can recognise a tRNA-binding domain in the interval 39 to 148; sequence AGTFNGVKVG…IDAPIGMDFR (110 aa). One can recognise a B5 domain in the interval 401-476; the sequence is PKPNKVALRR…RIYGYDNIPN (76 aa). Mg(2+) contacts are provided by Asp454, Asp460, Glu463, and Glu464. In terms of domain architecture, FDX-ACB spans 701 to 794; it reads SKFPANRRDI…VSEKFGASLR (94 aa).

The protein belongs to the phenylalanyl-tRNA synthetase beta subunit family. Type 1 subfamily. Tetramer of two alpha and two beta subunits. Mg(2+) serves as cofactor.

It localises to the cytoplasm. The enzyme catalyses tRNA(Phe) + L-phenylalanine + ATP = L-phenylalanyl-tRNA(Phe) + AMP + diphosphate + H(+). This Vibrio vulnificus (strain CMCP6) protein is Phenylalanine--tRNA ligase beta subunit.